The chain runs to 635 residues: Very-long-chain aldehyde decarbonylase GL1-6 (635 aa).

A run of 4 helical transmembrane segments spans residues 46-66 (LLNF…QLWI), 100-120 (IILT…AQVA), 127-147 (GMVV…YWLH), and 183-203 (VVYF…GTVS). The Fatty acid hydroxylase domain occupies 139–273 (VEFLYYWLHR…MPVYDYIYGT (135 aa)).

Belongs to the sterol desaturase family. Homodimer. Expressed in germinating seeds and shoots.

The protein resides in the endoplasmic reticulum membrane. The enzyme catalyses a long-chain fatty aldehyde + 2 NADPH + O2 + H(+) = a long-chain alkane + formate + 2 NADP(+) + H2O. Functionally, aldehyde decarbonylase involved in the conversion of aldehydes to alkanes. Core component of a very-long-chain alkane synthesis complex. The polypeptide is Very-long-chain aldehyde decarbonylase GL1-6 (Oryza sativa subsp. japonica (Rice)).